The primary structure comprises 2271 residues: Serine-rich adhesin for platelets (2271 aa).

The first 89 residues, 1 to 89 (MSKRQKAFHD…VNMLHDQQAF (89 aa)), serve as a signal peptide directing secretion. The tract at residues 90 to 230 (AASDAPLTSE…KTSTTSTSTA (141 aa)) is serine-rich repeat region 1, SRR1. The segment covering 100–111 (LNTQSETVGNQN) has biased composition (polar residues). The disordered stretch occupies residues 100–229 (LNTQSETVGN…NKTSTTSTST (130 aa)). Positions 112-128 (STTIEASTSTADSTSVT) are enriched in low complexity. Over residues 129 to 140 (KNSSSVQTSNSD) the composition is skewed to polar residues. The span at 150-229 (VTSTTNSTSN…NKTSTTSTST (80 aa)) shows a compositional bias: low complexity. Residues 231–751 (PVKLRTFSRL…TTFKYEVTRN (521 aa)) form a non-repeat region (NRR) region. Residues 245–491 (FASAATTTAV…QQVQFGTFEY (247 aa)) form an L-lectin module region. Positions 365, 367, 369, and 382 each coordinate Ca(2+). Residues 492–571 (TESAVTQVRY…NAGQSVTYYF (80 aa)) are beta-grasp module. The tract at residues 572–659 (TDVKAPTVTV…KSTTTFTINV (88 aa)) is cadherin-like module-1. Ca(2+)-binding residues include D573, K575, D601, N602, D645, D661, T663, D690, N691, and D734. Residues 660–751 (VDTTAPTVTP…TTFKYEVTRN (92 aa)) are cadherin-like module-2. Disordered regions lie at residues 751–791 (NSMS…VVST) and 806–2242 (SVSA…NGLL). Composition is skewed to low complexity over residues 752–791 (SMSDSVSTSGSTQQSQSVSTSKADSQSASTSTSGSIVVST), 806–1392 (SVSA…LSLS), and 1402–2214 (SNSA…ATSE). A serine-rich repeat region 2, SRR2 region spans residues 752–2232 (SMSDSVSTSG…AQSEKRLPDT (1481 aa)). The LPXTG sorting signal motif lies at 2229 to 2233 (LPDTG). The residue at position 2232 (T2232) is a Pentaglycyl murein peptidoglycan amidated threonine. A propeptide spans 2233-2271 (GDSIKQNGLLGGVMTLLVGLGLMKRKKKKDENDQDDSQA) (removed by sortase).

Belongs to the serine-rich repeat protein (SRRP) family. Post-translationally, proteolytically cleaved by a metalloprotease. Glycosylated. It is probable that most of the Ser residues in SSR1 and SSR2 are O-GlcNAcylated. Sequential glycosylation by sugar transferases are able to generate complex sugar polymorphisms.

The protein localises to the secreted. The protein resides in the cell wall. In terms of biological role, mediates binding to human platelets, possibly through a receptor-ligand interaction. Probably associated with virulence in endovascular infection. Plays a positive role in biofilm formation, possibly by self-association via the non-repeat region (NRR or binding region, BR). Binds to and plays a role in human lung epithelial cell invasion via the L-lectin module of its NRR domain; N-acetylneuraminic acid (Neu5Ac) inhibits binding. Treatment of host cells with neuraminidase decreases adherence of S.aureus cells, suggesting SraP recognizes a host terminal Neu5Ac moiety as a receptor. The sequence is that of Serine-rich adhesin for platelets from Staphylococcus aureus (strain NCTC 8325 / PS 47).